The chain runs to 203 residues: Nudix hydrolase 12, mitochondrial (203 aa).

Residues 18–166 (NFRLVSGCIP…WMQRALEEFL (149 aa)) enclose the Nudix hydrolase domain. Residues 66–87 (GGWEDDETVLEAASREAIEEAG) carry the Nudix box motif. Positions 81 and 85 each coordinate Mg(2+).

It belongs to the Nudix hydrolase family. The cofactor is Mg(2+). Mn(2+) is required as a cofactor. Expressed in roots, leaves, stems and inflorescences.

It is found in the mitochondrion. Its function is as follows. Probably mediates the hydrolysis of some nucleoside diphosphate derivatives. This is Nudix hydrolase 12, mitochondrial (NUDT12) from Arabidopsis thaliana (Mouse-ear cress).